A 1028-amino-acid chain; its full sequence is Sporulation-specific protein 3 (1028 aa).

The protein localises to the prospore membrane. In terms of biological role, has a role in spore morphogenesis. Involved in the assembly of the forespore membrane. The chain is Sporulation-specific protein 3 (spo3) from Schizosaccharomyces pombe (strain 972 / ATCC 24843) (Fission yeast).